The sequence spans 206 residues: Imidazoleglycerol-phosphate dehydratase (206 aa).

The interval 1–21 is disordered; the sequence is MTTPSTAPTPAPRKAEVSRNT.

The protein belongs to the imidazoleglycerol-phosphate dehydratase family.

Its subcellular location is the cytoplasm. The catalysed reaction is D-erythro-1-(imidazol-4-yl)glycerol 3-phosphate = 3-(imidazol-4-yl)-2-oxopropyl phosphate + H2O. The protein operates within amino-acid biosynthesis; L-histidine biosynthesis; L-histidine from 5-phospho-alpha-D-ribose 1-diphosphate: step 6/9. The sequence is that of Imidazoleglycerol-phosphate dehydratase from Polaromonas sp. (strain JS666 / ATCC BAA-500).